A 99-amino-acid polypeptide reads, in one-letter code: Large ribosomal subunit protein bL21 (99 aa).

Belongs to the bacterial ribosomal protein bL21 family. Part of the 50S ribosomal subunit. Contacts protein L20.

This protein binds to 23S rRNA in the presence of protein L20. In Mycoplasmopsis pulmonis (strain UAB CTIP) (Mycoplasma pulmonis), this protein is Large ribosomal subunit protein bL21.